Here is a 236-residue protein sequence, read N- to C-terminus: Ribonuclease HII (236 aa).

One can recognise an RNase H type-2 domain in the interval 27 to 219 (RILCGVDEAG…VRRALDGAPP (193 aa)). A divalent metal cation contacts are provided by Asp-33, Glu-34, and Asp-128. The disordered stretch occupies residues 212–236 (RALDGAPPPAGDAVPQTDAKTAWAD).

The protein belongs to the RNase HII family. Mn(2+) serves as cofactor. The cofactor is Mg(2+).

It is found in the cytoplasm. It catalyses the reaction Endonucleolytic cleavage to 5'-phosphomonoester.. Functionally, endonuclease that specifically degrades the RNA of RNA-DNA hybrids. The polypeptide is Ribonuclease HII (Ralstonia nicotianae (strain ATCC BAA-1114 / GMI1000) (Ralstonia solanacearum)).